A 278-amino-acid polypeptide reads, in one-letter code: Large ribosomal subunit protein uL2c (278 aa).

Residues 222–241 (GVVMNPNDHPHGGGEGRSPI) form a disordered region.

It belongs to the universal ribosomal protein uL2 family. As to quaternary structure, part of the 50S ribosomal subunit.

It is found in the plastid. The protein resides in the chloroplast. In Tupiella akineta (Green alga), this protein is Large ribosomal subunit protein uL2c (rpl2).